The sequence spans 479 residues: UDP-glycosyltransferase 71B6 (479 aa).

UDP-alpha-D-glucose is bound by residues serine 275, 342 to 344, 359 to 367, and 381 to 384; these read AEQ, HGGWNSTLE, and YAEQ.

It belongs to the UDP-glycosyltransferase family.

Functionally, glucosyltransferase that glucosylates the (+) enantiomer of abscisic acid ((+)-ABA). Is not active on structural analogs with alterations to the 8'- and 9'- methyl groups. This chain is UDP-glycosyltransferase 71B6 (UGT71B6), found in Arabidopsis thaliana (Mouse-ear cress).